Here is a 446-residue protein sequence, read N- to C-terminus: Exodeoxyribonuclease 7 large subunit (446 aa).

It belongs to the XseA family. In terms of assembly, heterooligomer composed of large and small subunits.

It localises to the cytoplasm. The enzyme catalyses Exonucleolytic cleavage in either 5'- to 3'- or 3'- to 5'-direction to yield nucleoside 5'-phosphates.. In terms of biological role, bidirectionally degrades single-stranded DNA into large acid-insoluble oligonucleotides, which are then degraded further into small acid-soluble oligonucleotides. In Vibrio cholerae serotype O1 (strain ATCC 39315 / El Tor Inaba N16961), this protein is Exodeoxyribonuclease 7 large subunit.